Consider the following 329-residue polypeptide: Aurora kinase B (329 aa).

Positions 1–14 are enriched in basic residues; the sequence is MTLSRAKHANRNHL. The segment at 1-21 is disordered; it reads MTLSRAKHANRNHLPHLLAKV. Residues 53–305 form the Protein kinase domain; the sequence is FEMGAHLGRG…LVDVMTHYWV (253 aa). ATP contacts are provided by residues 59 to 67 and lysine 82; that span reads LGRGKFGRV. The active-site Proton acceptor is aspartate 178.

The protein belongs to the protein kinase superfamily. Ser/Thr protein kinase family. Aurora subfamily. Interacts with Incenp and Cdc37. Mg(2+) serves as cofactor.

It localises to the chromosome. Its subcellular location is the cytoplasm. The protein localises to the cytoskeleton. The protein resides in the midbody. It catalyses the reaction L-seryl-[protein] + ATP = O-phospho-L-seryl-[protein] + ADP + H(+). The enzyme catalyses L-threonyl-[protein] + ATP = O-phospho-L-threonyl-[protein] + ADP + H(+). Functionally, serine/threonine-protein kinase that mediates both meiotic and mitotic chromosome segregation. Required for histone H3 'Ser-10' phosphorylation. Phosphorylates mei-S332 within residues 124-126 and stabilizes its association with centromeres during meiosis. May regulate the function of the ESCRT-III complex core component shrb during abscission of germline cells in oogenesis. The chain is Aurora kinase B from Drosophila melanogaster (Fruit fly).